The chain runs to 287 residues: Beta-lactamase GES-1 (287 aa).

A signal peptide spans 1 to 18 (MRFIHALLLAGIAHSAYA). C63 and C233 form a disulfide bridge. S64 acts as the Nucleophile; acyl-ester intermediate in catalysis. Positions 67, 125, 161, and 232 each coordinate a beta-lactam.

The protein belongs to the class-A beta-lactamase family. Monomer. May form dimers.

It carries out the reaction a beta-lactam + H2O = a substituted beta-amino acid. With respect to regulation, inhibited by the beta-lactamase-blocking agents clavulanic acid, tazobactam, sulbactam and tazobactam and the carbapenem, imipenem. Inhibition by imipenem may involve Gly-165. Extended-spectrum beta-lactamase (ESBL) which confers resistance to penicillins, as well as first, second, third and fourth-generation cephalosporins. Has ceftazidime-hydrolyzing activity. Inactive against the carbapenems, imipenem, meropenem, ertapenem and doripenem. However, weak hydrolytic activity with respect to imipenem has also been reported. This is Beta-lactamase GES-1 from Klebsiella pneumoniae.